Here is a 480-residue protein sequence, read N- to C-terminus: Histone-lysine N-methyltransferase ASHR1 (480 aa).

The region spanning 11 to 248 (RCLGVSNLPQ…KDSEITISYI (238 aa)) is the SET domain. Positions 56, 59, 68, 71, 77, 81, 89, and 93 each coordinate Zn(2+). An MYND-type zinc finger spans residues 56–93 (CDGCFKTNNLKKCSACQVVWYCGSSCQKSEWKLHRDEC).

The protein belongs to the class V-like SAM-binding methyltransferase superfamily. Histone-lysine methyltransferase family. SET2 subfamily.

The protein localises to the nucleus. It is found in the chromosome. The enzyme catalyses L-lysyl-[histone] + S-adenosyl-L-methionine = N(6)-methyl-L-lysyl-[histone] + S-adenosyl-L-homocysteine + H(+). Histone methyltransferase. The protein is Histone-lysine N-methyltransferase ASHR1 (ASHR1) of Arabidopsis thaliana (Mouse-ear cress).